The primary structure comprises 71 residues: UPF0434 protein APH_0052 (71 aa).

Residues 52-63 (RKLQPEEPKEGS) are compositionally biased toward basic and acidic residues. The segment at 52-71 (RKLQPEEPKEGSELQSSDNQ) is disordered.

This sequence belongs to the UPF0434 family.

The chain is UPF0434 protein APH_0052 from Anaplasma phagocytophilum (strain HZ).